We begin with the raw amino-acid sequence, 230 residues long: Ribonuclease 3 (230 aa).

The 121-residue stretch at 5–125 folds into the RNase III domain; that stretch reads YSRFYNILGY…VIGAIYLDSD (121 aa). A Mg(2+)-binding site is contributed by Glu-40. Asp-44 is a catalytic residue. Positions 111 and 114 each coordinate Mg(2+). The active site involves Glu-114. The DRBM domain occupies 153 to 223; that stretch reads DSKSKLQEIL…AEKMIEMLSQ (71 aa).

Belongs to the ribonuclease III family. As to quaternary structure, homodimer. It depends on Mg(2+) as a cofactor.

It is found in the cytoplasm. It catalyses the reaction Endonucleolytic cleavage to 5'-phosphomonoester.. Its function is as follows. Digests double-stranded RNA. Involved in the processing of primary rRNA transcript to yield the immediate precursors to the large and small rRNAs (23S and 16S). Processes some mRNAs, and tRNAs when they are encoded in the rRNA operon. Processes pre-crRNA and tracrRNA of type II CRISPR loci if present in the organism. The sequence is that of Ribonuclease 3 from Francisella tularensis subsp. tularensis (strain FSC 198).